Reading from the N-terminus, the 107-residue chain is MSRHQFDLIMCLKQPGVQTGLLCEKCDGKCPICDSYVRPKRKVRVCENCSFGKQAKNCIICNLNVGVNDAFYCWECCRLGKDKDGCPRILNLGSNRLDRHFEKKKKV.

This sequence belongs to the PHF5 family. Component of the spliceosome where it interacts with CUS1, HSH49, HSH155, IST3 and RSE1. Also interacts with YRA1.

Its subcellular location is the nucleus. Functionally, required for pre-mRNA splicing. Involved in regulation of drug sensitivity and may play a role in multidrug resistance. This Saccharomyces cerevisiae (strain ATCC 204508 / S288c) (Baker's yeast) protein is Pre-mRNA-splicing factor RDS3 (RDS3).